The primary structure comprises 1594 residues: Transcription factor Gibbin (1594 aa).

Disordered stretches follow at residues 19–111 (PDYL…RHWD), 149–241 (LRLS…LADA), 256–307 (QLLE…DPLG), and 367–464 (CSPH…RKGK). Residues 30 to 47 (GGPPTPRPLLPTRPPASP) show a composition bias toward pro residues. Lysine 79 carries the N6-acetyllysine modification. Residues 165-177 (SFFSSPSLANSIR) show a composition bias toward polar residues. Basic and acidic residues predominate over residues 178–193 (SPEERANPHTKSERPS). Residues 228 to 240 (PEPDGPDYSELAD) are compositionally biased toward acidic residues. At serine 267 the chain carries Phosphoserine. The span at 272–303 (PQLLDPQPRFLDPQALEPLGEGLELPPLQPLA) shows a compositional bias: low complexity. Residues 391 to 401 (ILCRRRKAGRG) show a composition bias toward basic residues. A DNA-binding region (a.T hook 1) is located at residues 395 to 407 (RRKAGRGRKADSG). The span at 427–447 (EPPPLPPPPPPTLSGPGPVPE) shows a compositional bias: pro residues. The a.T hook 2 DNA-binding region spans 541-553 (KRKRGRPPKNLLL). The interval 578 to 604 (MPEVKKRRRRKQKLASPQPSYAADAND) is disordered. Serine 593 carries the phosphoserine modification. Lysine 606 participates in a covalent cross-link: Glycyl lysine isopeptide (Lys-Gly) (interchain with G-Cter in SUMO2). The interval 714–789 (LTELGHPRKR…PGGQAGRNCG (76 aa)) is disordered. The span at 734–743 (KPKRKRRSRK) shows a compositional bias: basic residues. Residues serine 825 and serine 842 each carry the phosphoserine modification. Arginine 887 carries the omega-N-methylarginine modification. Serine 892 bears the Phosphoserine mark. Residues 942–967 (KLAPPPSAVARSPTTHPPANTYPPQY) form a disordered region. Serine 1060 carries the post-translational modification Phosphoserine. 2 disordered regions span residues 1152-1191 (VSET…QSSL) and 1245-1306 (STSA…PDLG). Low complexity-rich tracts occupy residues 1153–1168 (SETF…QFSQ), 1180–1191 (SEASSSEGQSSL), and 1245–1264 (STSA…PRQP). Serine 1180 carries the post-translational modification Phosphoserine. 3 positions are modified to phosphoserine: serine 1315, serine 1317, and serine 1392. Threonine 1394 carries the post-translational modification Phosphothreonine. The residue at position 1396 (serine 1396) is a Phosphoserine. Lysine 1402 participates in a covalent cross-link: Glycyl lysine isopeptide (Lys-Gly) (interchain with G-Cter in SUMO2). The disordered stretch occupies residues 1495–1525 (HLASPPATPKADKEPLEMARPPGPPRGPAAA). 2 positions are modified to phosphoserine: serine 1498 and serine 1540.

It localises to the nucleus. It is found in the chromosome. Its function is as follows. Transcription factor required for the proper patterning of the epidermis, which plays a key role in early epithelial morphogenesis. Directly binds promoter and enhancer regions and acts by maintaining local enhancer-promoter chromatin architecture. Interacts with many sequence-specific zinc-finger transcription factors and methyl-CpG-binding proteins to regulate the expression of mesoderm genes that wire surface ectoderm stratification. This Mus musculus (Mouse) protein is Transcription factor Gibbin.